A 311-amino-acid chain; its full sequence is 4-diphosphocytidyl-2-C-methyl-D-erythritol kinase (311 aa).

Lys16 is an active-site residue. Residue 100–110 (PIGAGLAGGSS) participates in ATP binding. Residue Asp142 is part of the active site.

It belongs to the GHMP kinase family. IspE subfamily.

It catalyses the reaction 4-CDP-2-C-methyl-D-erythritol + ATP = 4-CDP-2-C-methyl-D-erythritol 2-phosphate + ADP + H(+). It functions in the pathway isoprenoid biosynthesis; isopentenyl diphosphate biosynthesis via DXP pathway; isopentenyl diphosphate from 1-deoxy-D-xylulose 5-phosphate: step 3/6. Functionally, catalyzes the phosphorylation of the position 2 hydroxy group of 4-diphosphocytidyl-2C-methyl-D-erythritol. This is 4-diphosphocytidyl-2-C-methyl-D-erythritol kinase from Prochlorococcus marinus (strain MIT 9301).